Reading from the N-terminus, the 313-residue chain is Acetaldehyde dehydrogenase 2 (313 aa).

Residue 12–15 coordinates NAD(+); the sequence is SGNI. Cys132 functions as the Acyl-thioester intermediate in the catalytic mechanism. NAD(+) contacts are provided by residues 163-171 and Asn287; that span reads SAGPGTRAN.

Belongs to the acetaldehyde dehydrogenase family.

It catalyses the reaction acetaldehyde + NAD(+) + CoA = acetyl-CoA + NADH + H(+). The chain is Acetaldehyde dehydrogenase 2 (amnH) from Paraburkholderia xenovorans (strain LB400).